The chain runs to 132 residues: U11/U12 small nuclear ribonucleoprotein 25 kDa protein (132 aa).

One can recognise a Ubiquitin-like domain in the interval 41-132; that stretch reads MTVRVCKMDG…VSFIKKLRQK (92 aa).

In terms of assembly, component of the U11/U12 snRNPs that are part of the U12-type spliceosome.

Its subcellular location is the nucleus. This chain is U11/U12 small nuclear ribonucleoprotein 25 kDa protein (SNRNP25), found in Homo sapiens (Human).